Reading from the N-terminus, the 619-residue chain is 1-deoxy-D-xylulose-5-phosphate synthase (619 aa).

Residues His-74 and 115–117 each bind thiamine diphosphate; that span reads GHS. Asp-146 is a Mg(2+) binding site. Thiamine diphosphate contacts are provided by residues 147 to 148, Asn-175, and Tyr-285; that span reads GA. Asn-175 contributes to the Mg(2+) binding site. A disordered region spans residues 289 to 310; the sequence is EKSPSKYHGIPPSNDKKEEPNK. Glu-365 is a thiamine diphosphate binding site.

Belongs to the transketolase family. DXPS subfamily. In terms of assembly, homodimer. It depends on Mg(2+) as a cofactor. Requires thiamine diphosphate as cofactor.

It carries out the reaction D-glyceraldehyde 3-phosphate + pyruvate + H(+) = 1-deoxy-D-xylulose 5-phosphate + CO2. It functions in the pathway metabolic intermediate biosynthesis; 1-deoxy-D-xylulose 5-phosphate biosynthesis; 1-deoxy-D-xylulose 5-phosphate from D-glyceraldehyde 3-phosphate and pyruvate: step 1/1. In terms of biological role, catalyzes the acyloin condensation reaction between C atoms 2 and 3 of pyruvate and glyceraldehyde 3-phosphate to yield 1-deoxy-D-xylulose-5-phosphate (DXP). The chain is 1-deoxy-D-xylulose-5-phosphate synthase from Clostridium botulinum (strain Alaska E43 / Type E3).